Consider the following 339-residue polypeptide: Uroporphyrinogen decarboxylase (339 aa).

Substrate contacts are provided by residues 21–25 (RQAGR), Phe40, Asp71, Tyr147, Ser202, and His315.

The protein belongs to the uroporphyrinogen decarboxylase family. As to quaternary structure, homodimer.

The protein resides in the cytoplasm. The enzyme catalyses uroporphyrinogen III + 4 H(+) = coproporphyrinogen III + 4 CO2. It participates in porphyrin-containing compound metabolism; protoporphyrin-IX biosynthesis; coproporphyrinogen-III from 5-aminolevulinate: step 4/4. Functionally, catalyzes the decarboxylation of four acetate groups of uroporphyrinogen-III to yield coproporphyrinogen-III. The chain is Uroporphyrinogen decarboxylase from Helicobacter pylori (strain ATCC 700392 / 26695) (Campylobacter pylori).